Here is a 484-residue protein sequence, read N- to C-terminus: DNA-binding protein (484 aa).

The interval 1–69 (MASNQHSQRE…ESAEEEEAEP (69 aa)) is disordered. Residues 51 to 60 (SMAAIPLSPE) show a composition bias toward low complexity. At Y150 the chain carries Phosphotyrosine; by host. 2 residues coordinate Zn(2+): C239 and H241. Residues 252 to 286 (VEMDVTSESGQRALKENPSKAKVAQNRWGRNVVQI) are flexible loop. The Zn(2+) site is built by C294, C310, C351, C353, C405, and C421. The tract at residues 468–484 (ISLPTNHGDCREEPFDF) is C-terminal arm, DBP binding.

It belongs to the adenoviridae E2A DNA-binding protein family. As to quaternary structure, homomultimerizes on viral ssDNA bound to pTP. Forms a initiation complex with viral polymerase, pTP and hosts NFIA and POU2F1/OCT1. Interacts with host SRCAP.

It localises to the host nucleus. In terms of biological role, plays a role in the elongation phase of viral strand displacement replication by unwinding the template in an ATP-independent fashion, employing its capacity to form multimers. Also enhances the rate of initiation. Released from template upon second strand synthesis. Assembles in complex with viral pTP, viral pol, host NFIA and host POU2F1/OCT1 on viral origin of replication. Covers the whole ssDNA genome during synthesis. The complementary strand synthesis induces its relese from DNA template. May inhibit cellular transcription mediated by the interaction between host SRCAP and CBP. The protein is DNA-binding protein of Human adenovirus A serotype 12 (HAdV-12).